We begin with the raw amino-acid sequence, 176 residues long: uncharacterized protein (176 aa).

The disordered stretch occupies residues 71-176; it reads RDDMSSDSDG…YSTDDDEDDY (106 aa). 2 stretches are compositionally biased toward low complexity: residues 77 to 87 and 100 to 109; these read DSDGPAASPPG and SYSSSDSSAR. Over residues 140 to 152 the composition is skewed to basic residues; it reads KARRPARKKKRIG.

This is an uncharacterized protein from Orgyia pseudotsugata multicapsid polyhedrosis virus (OpMNPV).